Here is a 260-residue protein sequence, read N- to C-terminus: UPF0246 protein BamMC406_2140 (260 aa).

This sequence belongs to the UPF0246 family.

This Burkholderia ambifaria (strain MC40-6) protein is UPF0246 protein BamMC406_2140.